The following is a 435-amino-acid chain: Glutamyl-tRNA reductase (435 aa).

Substrate-binding positions include Thr-49 to Arg-52, Ser-109, Glu-114 to Gln-116, and Gln-120. Cys-50 (nucleophile) is an active-site residue. Gly-189–Ser-194 contacts NADP(+).

The protein belongs to the glutamyl-tRNA reductase family. As to quaternary structure, homodimer.

The catalysed reaction is (S)-4-amino-5-oxopentanoate + tRNA(Glu) + NADP(+) = L-glutamyl-tRNA(Glu) + NADPH + H(+). It participates in porphyrin-containing compound metabolism; protoporphyrin-IX biosynthesis; 5-aminolevulinate from L-glutamyl-tRNA(Glu): step 1/2. In terms of biological role, catalyzes the NADPH-dependent reduction of glutamyl-tRNA(Glu) to glutamate 1-semialdehyde (GSA). The chain is Glutamyl-tRNA reductase from Listeria monocytogenes serotype 4b (strain F2365).